We begin with the raw amino-acid sequence, 150 residues long: Large ribosomal subunit protein bL9 (150 aa).

The protein belongs to the bacterial ribosomal protein bL9 family.

In terms of biological role, binds to the 23S rRNA. The polypeptide is Large ribosomal subunit protein bL9 (Alteromonas mediterranea (strain DSM 17117 / CIP 110805 / LMG 28347 / Deep ecotype)).